A 75-amino-acid polypeptide reads, in one-letter code: MKGKIPKIRNQANKVKRTPRYMEFPVTYEVYHVESGDTLWTIAKSFEIPVQQLMNLNKLSSDRIYPGQIIKIRER.

The region spanning 29–72 (EVYHVESGDTLWTIAKSFEIPVQQLMNLNKLSSDRIYPGQIIKI) is the LysM domain.

This is an uncharacterized protein from Bacillus subtilis (strain 168).